Consider the following 126-residue polypeptide: Glycine cleavage system H protein (126 aa).

Positions 22–103 constitute a Lipoyl-binding domain; that stretch reads KAYIGITDYA…PYGSWMALVE (82 aa). K63 is subject to N6-lipoyllysine.

This sequence belongs to the GcvH family. In terms of assembly, the glycine cleavage system is composed of four proteins: P, T, L and H. Requires (R)-lipoate as cofactor.

Functionally, the glycine cleavage system catalyzes the degradation of glycine. The H protein shuttles the methylamine group of glycine from the P protein to the T protein. The protein is Glycine cleavage system H protein of Thermoanaerobacter pseudethanolicus (strain ATCC 33223 / 39E) (Clostridium thermohydrosulfuricum).